Consider the following 466-residue polypeptide: 3-isopropylmalate dehydratase large subunit (466 aa).

[4Fe-4S] cluster-binding residues include C347, C407, and C410.

It belongs to the aconitase/IPM isomerase family. LeuC type 1 subfamily. As to quaternary structure, heterodimer of LeuC and LeuD. It depends on [4Fe-4S] cluster as a cofactor.

It catalyses the reaction (2R,3S)-3-isopropylmalate = (2S)-2-isopropylmalate. The protein operates within amino-acid biosynthesis; L-leucine biosynthesis; L-leucine from 3-methyl-2-oxobutanoate: step 2/4. Functionally, catalyzes the isomerization between 2-isopropylmalate and 3-isopropylmalate, via the formation of 2-isopropylmaleate. The protein is 3-isopropylmalate dehydratase large subunit of Escherichia fergusonii (strain ATCC 35469 / DSM 13698 / CCUG 18766 / IAM 14443 / JCM 21226 / LMG 7866 / NBRC 102419 / NCTC 12128 / CDC 0568-73).